We begin with the raw amino-acid sequence, 301 residues long: UDP-N-acetylenolpyruvoylglucosamine reductase (301 aa).

The FAD-binding PCMH-type domain maps to 30–194; the sequence is VGGEADYLVF…LSVKFALAPG (165 aa). The active site involves R173. S223 (proton donor) is an active-site residue. The active site involves E293.

The protein belongs to the MurB family. FAD serves as cofactor.

The protein resides in the cytoplasm. The catalysed reaction is UDP-N-acetyl-alpha-D-muramate + NADP(+) = UDP-N-acetyl-3-O-(1-carboxyvinyl)-alpha-D-glucosamine + NADPH + H(+). It participates in cell wall biogenesis; peptidoglycan biosynthesis. Its function is as follows. Cell wall formation. This Streptococcus pneumoniae (strain Hungary19A-6) protein is UDP-N-acetylenolpyruvoylglucosamine reductase.